A 612-amino-acid polypeptide reads, in one-letter code: Zinc metalloproteinase nas-36 (612 aa).

The N-terminal stretch at 1-16 is a signal peptide; it reads MLLLVLLFVFISATNA. A glycan (N-linked (GlcNAc...) asparagine) is linked at Asn15. Positions 17 to 122 are excised as a propeptide; it reads SDVGRRELEK…KSKPNVRGRR (106 aa). In terms of domain architecture, Peptidase M12A spans 123 to 320; it reads SFDASPESKW…IETINKAYCS (198 aa). N-linked (GlcNAc...) asparagine glycosylation is present at Asn163. 8 disulfide bridges follow: Cys166–Cys319, Cys190–Cys209, Cys329–Cys343, Cys345–Cys354, Cys365–Cys394, Cys515–Cys546, Cys519–Cys551, and Cys531–Cys536. His217 lines the Zn(2+) pocket. Glu218 is a catalytic residue. 2 residues coordinate Zn(2+): His221 and His227. An EGF-like domain is found at 320–355; that stretch reads SDRCSGSNDCKNGGYPHPKQCDTCLCPNGLSGPKCE. In terms of domain architecture, CUB spans 365-478; sequence CGGKIVVKEE…VGFKLQARAT (114 aa). One can recognise a TSP type-1 domain in the interval 503 to 552; the sequence is TDQWAEWGSWSQCSRSCGGCGIMSRVRVCRTKQCKGRRQEFSTCNLKACP.

Requires Zn(2+) as cofactor.

Its subcellular location is the secreted. With respect to regulation, inhibited by 1,10-phenanthroline. Its function is as follows. Metalloprotease. Involved in molting, a process during larval stages in which a new cuticle is formed and the old cuticle is shed. The protein is Zinc metalloproteinase nas-36 of Haemonchus contortus (Barber pole worm).